Reading from the N-terminus, the 337-residue chain is Casein kinase I isoform alpha (337 aa).

Ala-2 is modified (N-acetylalanine). A Phosphoserine modification is found at Ser-4. An N6-acetyllysine modification is found at Lys-8. The region spanning 17–285 is the Protein kinase domain; the sequence is YKLVRKIGSG…YLRQLFRILF (269 aa). ATP contacts are provided by residues 23–31 and Lys-46; that span reads IGSGSFGDI. Catalysis depends on Asp-136, which acts as the Proton acceptor. Low complexity predominate over residues 309 to 325; that stretch reads AASSSGQGQQAQTPTGK. The tract at residues 309–337 is disordered; the sequence is AASSSGQGQQAQTPTGKQTDKTKSNMKGF.

This sequence belongs to the protein kinase superfamily. CK1 Ser/Thr protein kinase family. Casein kinase I subfamily. Interacts with the Axin complex. Interacts with TUT1, leading to TUT1 phosphorylation. Interacts with FAM83A, FAM83B, FAM83C, FAM83D, FAM83E, FAM83F, FAM83G and FAM83H (via DUF1669). Interaction with FAM83H recruits CSNK1A1 to keratin filaments. In terms of processing, phosphorylated by MTOR in response to mitogenic stimulation, leading to its activation.

Its subcellular location is the cytoplasm. It is found in the cytoskeleton. The protein localises to the microtubule organizing center. The protein resides in the centrosome. It localises to the chromosome. Its subcellular location is the centromere. It is found in the kinetochore. The protein localises to the nucleus speckle. The protein resides in the cilium basal body. It localises to the spindle. It carries out the reaction L-seryl-[protein] + ATP = O-phospho-L-seryl-[protein] + ADP + H(+). The catalysed reaction is L-threonyl-[protein] + ATP = O-phospho-L-threonyl-[protein] + ADP + H(+). Casein kinases are operationally defined by their preferential utilization of acidic proteins such as caseins as substrates. Can phosphorylate a large number of proteins. Participates in Wnt signaling. Phosphorylates CTNNB1 at 'Ser-45'. May phosphorylate PER1 and PER2. May play a role in segregating chromosomes during mitosis. May play a role in keratin cytoskeleton disassembly and thereby, it may regulate epithelial cell migration. Acts as a positive regulator of mTORC1 and mTORC2 signaling in response to nutrients by mediating phosphorylation of DEPTOR inhibitor. Acts as an inhibitor of NLRP3 inflammasome assembly by mediating phosphorylation of NLRP3. The polypeptide is Casein kinase I isoform alpha (Csnk1a1) (Mus musculus (Mouse)).